A 321-amino-acid polypeptide reads, in one-letter code: Putative ankyrin repeat domain-containing protein 26-like protein (321 aa).

ANK repeat units follow at residues Lys-48–Glu-78, Lys-82–Val-111, Lys-115–Leu-144, Tyr-148–Ser-177, and Asp-181–Ala-210. Disordered stretches follow at residues Glu-222 to Asn-242 and Phe-268 to Ile-321. Polar residues predominate over residues Pro-229–Asn-242.

The sequence is that of Putative ankyrin repeat domain-containing protein 26-like protein (ANKRD26P1) from Homo sapiens (Human).